The sequence spans 325 residues: Peroxidase 1 (325 aa).

A signal peptide spans 1-21 (MAIKNILALVVLLSVVGVSVA). Disulfide bonds link Cys-35-Cys-113, Cys-68-Cys-73, Cys-119-Cys-321, and Cys-198-Cys-230. Catalysis depends on His-66, which acts as the Proton acceptor. Positions 67, 70, 72, 74, and 76 each coordinate Ca(2+). Pro-161 contributes to the substrate binding site. His-191 is a binding site for heme b. A Ca(2+)-binding site is contributed by Thr-192. N-linked (GlcNAc...) asparagine glycosylation is present at Asn-207. Ca(2+)-binding residues include Asp-242, Ser-245, and Asp-250.

The protein belongs to the peroxidase family. Classical plant (class III) peroxidase subfamily. The cofactor is heme b. It depends on Ca(2+) as a cofactor. As to expression, slightly expressed in roots.

Its subcellular location is the secreted. It catalyses the reaction 2 a phenolic donor + H2O2 = 2 a phenolic radical donor + 2 H2O. In terms of biological role, removal of H(2)O(2), oxidation of toxic reductants, biosynthesis and degradation of lignin, suberization, auxin catabolism, response to environmental stresses such as wounding, pathogen attack and oxidative stress. These functions might be dependent on each isozyme/isoform in each plant tissue. This chain is Peroxidase 1 (PER1), found in Arabidopsis thaliana (Mouse-ear cress).